The primary structure comprises 407 residues: BTB/POZ and MATH domain-containing protein 1 (407 aa).

The MATH domain occupies 33 to 167; it reads NGFHEFKICG…ENSLLVRCRV (135 aa). A BTB domain is found at 203–270; the sequence is CDVVFQVDGE…IYWDELPDMQ (68 aa).

This sequence belongs to the Tdpoz family. Homodimer or heterodimer with BPM3, BPM5 and BPM6. Interacts with CUL3A and CUL3B. Interacts with RAP2-4 and RAP2-13. Binds to MYB56 at the promoter of FLOWERING LOCUS T (FT). As to expression, ubiquitous.

The protein resides in the nucleus. It participates in protein modification; protein ubiquitination. May act as a substrate-specific adapter of an E3 ubiquitin-protein ligase complex (CUL3-RBX1-BTB) which mediates the ubiquitination and subsequent proteasomal degradation of target proteins. The polypeptide is BTB/POZ and MATH domain-containing protein 1 (BPM1) (Arabidopsis thaliana (Mouse-ear cress)).